The following is a 434-amino-acid chain: (3,5-dihydroxyphenyl)acetyl-CoA 1,2-dioxygenase (434 aa).

Residues Asp184, Glu190, 223–226 (HPRY), 234–239 (AGINLK), Gly293, 322–324 (IPG), and Gln413 each bind substrate.

This sequence belongs to the enoyl-CoA hydratase/isomerase family. Homohexamer; dimer of trimers.

The enzyme catalyses (3,5-dihydroxyphenyl)acetyl-CoA + O2 = 2-(3,5-dihydroxyphenyl)-2-oxoacetate + CoA + H(+). Involved in the biosynthesis of the nonproteinogenic amino acid monomer (S)-3,5-dihydroxyphenylglycine (Dpg) responsible of the production of vancomycin and teicoplanin antibiotics. Catalyzes the unusual conversion 3,5-dihydroxyphenylacetyl-CoA (DPA-CoA) to 3,5-dihydroxyphenylglyoxylate. DpgC performed a net four-electron oxidation of the benzylic carbon of DPA-CoA and the hydrolysis of the thioester bond to generate free CoA. It can also use phenylacetyl-CoA (PA-CoA) as substrate. The polypeptide is (3,5-dihydroxyphenyl)acetyl-CoA 1,2-dioxygenase (dpgC) (Amycolatopsis orientalis (Nocardia orientalis)).